The sequence spans 553 residues: Zinc finger protein Elbow (553 aa).

2 disordered regions span residues 59-243 and 388-407; these read STKQ…MHSP and GGGG…SGGS. Composition is skewed to low complexity over residues 96–110 and 121–134; these read SPVS…TGSV and SSSS…TFKP. Polar residues-rich tracts occupy residues 137–146, 153–173, and 224–236; these read PNNNISNITT, TNLS…KSMT, and TAST…NSKE. The tract at residues 287–480 is self-association; that stretch reads SASAAAAAAS…PDAVLSAAAA (194 aa). Positions 287 to 553 are interaction with noc; sequence SASAAAAAAS…YGPRMGSSHP (267 aa). Positions 388 to 406 are enriched in gly residues; the sequence is GGGGGGSSKSSGSQGGSGG. Residues 437–466 form a C2H2-type zinc finger; it reads YVCSWIGSDAAYCGKRFGTSDDLFQHLRTH.

It belongs to the Elbow/Noc family. Self-associates. Interacts with gro and noc.

Its function is as follows. May negatively regulate Notch-induced cell proliferation in the eye-head primordium. May act in leg and wing primordia to negatively regulate body-wall specifying genes and thereby promote appendage formation. Required for tracheal development. The chain is Zinc finger protein Elbow (elB) from Drosophila melanogaster (Fruit fly).